The primary structure comprises 207 residues: Holliday junction branch migration complex subunit RuvA (207 aa).

The domain I stretch occupies residues M1–N64. Positions T65 to P143 are domain II. The interval A144–T158 is flexible linker. The segment at S159–I207 is domain III.

It belongs to the RuvA family. Homotetramer. Forms an RuvA(8)-RuvB(12)-Holliday junction (HJ) complex. HJ DNA is sandwiched between 2 RuvA tetramers; dsDNA enters through RuvA and exits via RuvB. An RuvB hexamer assembles on each DNA strand where it exits the tetramer. Each RuvB hexamer is contacted by two RuvA subunits (via domain III) on 2 adjacent RuvB subunits; this complex drives branch migration. In the full resolvosome a probable DNA-RuvA(4)-RuvB(12)-RuvC(2) complex forms which resolves the HJ.

The protein localises to the cytoplasm. The RuvA-RuvB-RuvC complex processes Holliday junction (HJ) DNA during genetic recombination and DNA repair, while the RuvA-RuvB complex plays an important role in the rescue of blocked DNA replication forks via replication fork reversal (RFR). RuvA specifically binds to HJ cruciform DNA, conferring on it an open structure. The RuvB hexamer acts as an ATP-dependent pump, pulling dsDNA into and through the RuvAB complex. HJ branch migration allows RuvC to scan DNA until it finds its consensus sequence, where it cleaves and resolves the cruciform DNA. In Aliivibrio fischeri (strain ATCC 700601 / ES114) (Vibrio fischeri), this protein is Holliday junction branch migration complex subunit RuvA.